The chain runs to 882 residues: Protein O-mannosyl-transferase TMTC1 (882 aa).

Residues 1–20 are Cytoplasmic-facing; it reads MVVTTSARGGGGDRTPSRRR. The tract at residues 1–20 is disordered; it reads MVVTTSARGGGGDRTPSRRR. A helical membrane pass occupies residues 21–41; it reads GCGLAPAGAAALLAGASCLCY. Residues 42 to 110 lie on the Extracellular side of the membrane; that stretch reads GRSLQGEFVH…KLNIFLTGMN (69 aa). A glycan (N-linked (GlcNAc...) asparagine) is linked at asparagine 86. A helical membrane pass occupies residues 111–131; the sequence is PFYFHAVNIILHCLVTLVLMY. At 132–137 the chain is on the cytoplasmic side; sequence TCDKTV. A helical transmembrane segment spans residues 138-157; it reads FKNRGLAFVTALLFAVHPIH. The Extracellular segment spans residues 158-160; that stretch reads TEA. A helical membrane pass occupies residues 161–181; the sequence is VAGIVGRADVLACLLFLLAFL. At 182-197 the chain is on the cytoplasmic side; sequence SYNRSLDQGCVGGSFP. Residues 198–218 traverse the membrane as a helical segment; it reads STVSPFFLLLSLFLGTCAMLV. Topologically, residues 219-221 are extracellular; sequence KET. The chain crosses the membrane as a helical span at residues 222–238; sequence GITVFGVCLVYDLFSLS. Over 239–313 the chain is Cytoplasmic; that stretch reads NKQDKSSNGA…SPRAVWSMMR (75 aa). The disordered stretch occupies residues 246-277; sequence NGALCPRSPQQPGSPQPSSLPGHPHRENGKQQ. Residues 251-267 show a composition bias toward low complexity; the sequence is PRSPQQPGSPQPSSLPG. The helical transmembrane segment at 314 to 334 threads the bilayer; the sequence is FLTYSYLLAFNVWLLLAPVTL. The Extracellular portion of the chain corresponds to 335 to 354; the sequence is CYDWQVGSIPLVETIWDMRN. The helical transmembrane segment at 355-375 threads the bilayer; it reads LATIFLAVVMALLSLHCLAAF. Residues 376 to 381 are Cytoplasmic-facing; it reads KRLEHK. A helical transmembrane segment spans residues 382–402; it reads EVLVGLLFLVFPFIPASNLFF. Position 403 (arginine 403) is a topological domain, extracellular. Residues 404 to 424 form a helical membrane-spanning segment; it reads VGFVVAERVLYMPSMGYCILF. Residues 425 to 438 are Cytoplasmic-facing; it reads VHGLSKLCTWLNRC. Residues 439–459 traverse the membrane as a helical segment; the sequence is GATTLIVSTVLLLLLFSWKTV. The Extracellular portion of the chain corresponds to 460–882; sequence KQNEIWLSRE…LQEVREKDQT (423 aa). TPR repeat units lie at residues 483–516, 517–547, 548–581, 582–615, 616–649, 650–682, 683–716, 751–784, 789–822, and 823–856; these read AKVHYNYANFLKDQGRNKEAIYHYRTALKLYPRH, ASALNNLGTLTRDTAEAKMYYQRALQLHPQH, NRALFNLGNLLKSQEKKEEAITLLKDSIKYGPEF, ADAYSSLASLLAEQERFKEAEEIYQTGIKNCPDS, SDLHNNYGVFLVDTGLPEKAVAHYQQAIKLSPSH, HVAMVNLGRLYRSLGENSMAEEWYKRALQVAHK, AEILSPLGALYYNTGRYEEALQIYQEAAALQPSQ, LECYRLLSAIYSKQENHDKALDAIDKALQLKPKD, SELFFTKGNQLREQNLLDKAFESYRVAVQLNPDQ, and AQAWMNMGGIQHIKGKYVSARAYYERALQLVPDS.

Belongs to the TMTC family. In terms of assembly, may interact with FAM168B.

The protein localises to the membrane. Its subcellular location is the endoplasmic reticulum. It catalyses the reaction a di-trans,poly-cis-dolichyl beta-D-mannosyl phosphate + L-seryl-[protein] = 3-O-(alpha-D-mannosyl)-L-seryl-[protein] + a di-trans,poly-cis-dolichyl phosphate + H(+). It carries out the reaction a di-trans,poly-cis-dolichyl beta-D-mannosyl phosphate + L-threonyl-[protein] = 3-O-(alpha-D-mannosyl)-L-threonyl-[protein] + a di-trans,poly-cis-dolichyl phosphate + H(+). It participates in protein modification; protein glycosylation. Functionally, transfers mannosyl residues to the hydroxyl group of serine or threonine residues. The 4 members of the TMTC family are O-mannosyl-transferases dedicated primarily to the cadherin superfamily, each member seems to have a distinct role in decorating the cadherin domains with O-linked mannose glycans at specific regions. Also acts as O-mannosyl-transferase on other proteins such as PDIA3. This Homo sapiens (Human) protein is Protein O-mannosyl-transferase TMTC1.